Here is a 360-residue protein sequence, read N- to C-terminus: Cyclin-D1-binding protein 1 (360 aa).

Ala2 is modified (N-acetylalanine). Interaction with TCF3 stretches follow at residues 2–184 (ASAT…VDFV) and 150–360 (ISYN…ELEL). 2 interaction with RPLP0 regions span residues 2–190 (ASAT…AHEE) and 240–360 (LIIP…ELEL). Residues 2 to 208 (ASATAPAAAV…DPYSGLLNDT (207 aa)) form a required for interaction with CCND1 region.

This sequence belongs to the CCNDBP1 family. Interacts with CCND1 and GRAP2. May also interact with COPS5, RPLP0, SIRT6, SYF2 and TCF3. Phosphorylated.

It is found in the cytoplasm. The protein resides in the nucleus. Functionally, may negatively regulate cell cycle progression. May act at least in part via inhibition of the cyclin-D1/CDK4 complex, thereby preventing phosphorylation of RB1 and blocking E2F-dependent transcription. The chain is Cyclin-D1-binding protein 1 (CCNDBP1) from Pongo abelii (Sumatran orangutan).